Reading from the N-terminus, the 467-residue chain is Dimethylamine methyltransferase MtbB1 (467 aa).

Pyl-356 is a non-standard amino acid (pyrrolysine).

This sequence belongs to the dimethylamine methyltransferase family. In terms of assembly, may form homotetramers or homopentamers.

It catalyses the reaction Co(I)-[dimethylamine-specific corrinoid protein] + dimethylamine + H(+) = methyl-Co(III)-[dimethylamine-specific corrinoid protein] + methylamine. It functions in the pathway one-carbon metabolism; methanogenesis from dimethylamine. Functionally, catalyzes the transfer of a methyl group from dimethylamine to the corrinoid cofactor of MtbC. The major or perhaps only DMA methyltransferase expressed under inducing conditions. The protein is Dimethylamine methyltransferase MtbB1 of Methanosarcina barkeri.